We begin with the raw amino-acid sequence, 74 residues long: Protein krueppel (74 aa).

4 C2H2-type zinc fingers span residues 1 to 4 (ERTH), 10 to 32 (FECPECHKRFTRDHHLKTHMRLH), 38 to 60 (YHCSHCDRQFVQVANLRRHLRVH), and 66 to 74 (YACELCAAK).

This sequence belongs to the krueppel C2H2-type zinc-finger protein family.

It localises to the nucleus. Its function is as follows. Krueppel is a gap class segmentation protein. This is Protein krueppel (Kr) from Apis mellifera (Honeybee).